The primary structure comprises 294 residues: 4-hydroxy-tetrahydrodipicolinate synthase (294 aa).

Residue Thr-45 participates in pyruvate binding. Tyr-133 serves as the catalytic Proton donor/acceptor. The active-site Schiff-base intermediate with substrate is the Lys-161. Position 203 (Ile-203) interacts with pyruvate.

This sequence belongs to the DapA family. In terms of assembly, homotetramer; dimer of dimers.

The protein resides in the cytoplasm. The enzyme catalyses L-aspartate 4-semialdehyde + pyruvate = (2S,4S)-4-hydroxy-2,3,4,5-tetrahydrodipicolinate + H2O + H(+). It participates in amino-acid biosynthesis; L-lysine biosynthesis via DAP pathway; (S)-tetrahydrodipicolinate from L-aspartate: step 3/4. In terms of biological role, catalyzes the condensation of (S)-aspartate-beta-semialdehyde [(S)-ASA] and pyruvate to 4-hydroxy-tetrahydrodipicolinate (HTPA). This Thioalkalivibrio sulfidiphilus (strain HL-EbGR7) protein is 4-hydroxy-tetrahydrodipicolinate synthase.